Consider the following 378-residue polypeptide: MTKVVVGLSGGVDSAVAAFLLKKQGYLVEAVFMRNWDSNLNFDIQGNPTLNDICPQELDYKDALKVSEQLGIKLHRVDFIEEYWQKVFMSFIKAFENNLTPNPDILCNNEIKFRAFIEYVTTKLAPRYIAMGHYANIIYETFSEQKLFPQLACAVDQNKDQTYFLSQLATKQLQNILFPLGNLTKQEVRQIALENNLINATKKDSTGICFIGERNFFQFLSNYLPAQKGDIKTLDGTFLAHHKGVMYYTIGQRKNLGLGDFSSQKPWFVVGKHLQTNTLYVEQGNTHPYLYSDKALISDIVWRGKKTNLHLQAKMRYRQPNQDVILTWIDQNTLEIYYPQTIKAVTPGQICAFYNNNICCGAGVIKEVYFQGTKRLYT.

Residues 7 to 14 (GLSGGVDS) and methionine 33 each bind ATP. The tract at residues 102–104 (NPD) is interaction with target base in tRNA. The active-site Nucleophile is cysteine 107. A disulfide bridge connects residues cysteine 107 and cysteine 209. Residue glycine 132 participates in ATP binding. The tract at residues 159-161 (KDQ) is interaction with tRNA. Catalysis depends on cysteine 209, which acts as the Cysteine persulfide intermediate. The interval 316 to 317 (RY) is interaction with tRNA.

The protein belongs to the MnmA/TRMU family.

Its subcellular location is the cytoplasm. It carries out the reaction S-sulfanyl-L-cysteinyl-[protein] + uridine(34) in tRNA + AH2 + ATP = 2-thiouridine(34) in tRNA + L-cysteinyl-[protein] + A + AMP + diphosphate + H(+). Its function is as follows. Catalyzes the 2-thiolation of uridine at the wobble position (U34) of tRNA, leading to the formation of s(2)U34. The chain is tRNA-specific 2-thiouridylase MnmA from Aster yellows witches'-broom phytoplasma (strain AYWB).